Reading from the N-terminus, the 291-residue chain is N-acetylmannosamine kinase (291 aa).

ATP is bound by residues 5-12 and 132-139; these read AIDIGGTK and GVGGGVVS. Residues His-156, Cys-166, Cys-168, and Cys-173 each coordinate Zn(2+).

This sequence belongs to the ROK (NagC/XylR) family. NanK subfamily. In terms of assembly, homodimer.

It carries out the reaction an N-acyl-D-mannosamine + ATP = an N-acyl-D-mannosamine 6-phosphate + ADP + H(+). It functions in the pathway amino-sugar metabolism; N-acetylneuraminate degradation; D-fructose 6-phosphate from N-acetylneuraminate: step 2/5. Catalyzes the phosphorylation of N-acetylmannosamine (ManNAc) to ManNAc-6-P. In Escherichia coli O157:H7, this protein is N-acetylmannosamine kinase.